The primary structure comprises 1647 residues: MSKKNQQISPVLDNIVTSLLQSLSDSDESVRSTVVNSLYEIGFRQPNFVLQVACDYINKNQKIDQTHRVKILNSILQILEQTRNQLTDALSLNLIAMSISEMTRDKEVVPDWQQVASSLLVSLGLRYPSQIMDELLKRFEPGTLPHYFVMKTLGDFISSNPIPTVPKIREILSRILPVLGTIKHDNFKWVFAAALGHFADAIVQYVANIDTAPDKSLTLYSFSSEFYPALELMFSKWLGTNHEKVRLVTIEAVGSICSILSVEQLESQIQKLVVGVLSMLKKEKDLLPVTHSLCCILEVCVKNDLKLQVNELLIPIMTTLHPLVCIVPDYSNPASTKTYNEVLRCFEVIGRGYSDVLISFLNQRLENRDLRSRAGSLSIIRHIVTRLDVELADKKPLILSAIKPLIQTEPSLFIKKYLAQIIIAMAPYGYLEMEGGLTLLEFIVKGSSWYQDSEIGKAQPTQPPKKIENPDLHVTDSELRLICDNILNLITTTMPQLESILWPYLFEFILPEQYTAAIPVVTKSLTYIALSKKSVDSDDYYIDFDKEINLPKPTQIIARYFVLLTAPLRRNQLGIRILENMKAIGPILHPSICDMWDVTLPKLISYLEDHTDIETWNKNQWEELVLRLLSETIKNAADDEWTVALGNSMSEQIDHYKKDPILKRSLYKQMGLIMQKCSHKEFVKSKIEVMFTSVDYTNSLENEGCAIGLGYCGASHFDIVLEKINFYIKNSMVKKSGFFGKKGPKGIKNCILLSLGYSATYAQSALFSSRVEVHVIQPIKPSILQLKKVPKKLSSIKMIDLIGKALHPNKASTFIFKQRDELMKLLISYMSTPPPSTNNQVKIDGTNACSTLVNLEPMISLELEVQIINLSLSFFNQQVSPANATNTDSDEYKEVNSLITSVNNLLSTILYNQTTIACLNRLIGYLDPLSRSKDAHIRERSLFCILYLVKKFIEYSTDSDSMPTDKLFDSIGTTLSVLIPRCTDPEINVRRYAVESIQLILYIGFMLKNATPDNRRVKPSEVLHPLTSIRDSITTTEVNEQFSLVFEISVIISKMISLEEIPKFLEGSIKGLQDLQAFSTNGSCIIINGLIKTRGEELIEYVPILVKGLLTAMEGITSETTMNGTLVSLRSLANHHLIPVLSVLLEYPMPHSVHVIKSFQIIAKDKNLISPTLIHLMDLLNNKPVYEEKPDPKNKNRIIPQPFAIALAATCSLGEIFQLTEVEEVVKYFYHQLISTLVLRAGTCNNSLPCLIEVASTNPKAKASAISLIPSQQMLVTFRQFFKCTKEEETLLAEIESKGSFSQLETPFYHQGIIEILSVVSSHHPDLIQGIFQYLLPYQRSNHLEHRIVTISVTTELINHCKDKELIQRLINTLLNSLVDPLVKLISLKGLSNIVSAGVEQTNRYAPTVIDALSTSIDDQDETMAMECMLGLSKIFEVADEGRVAPILVNICNRIRPAFEKPNDSIRAASFQLFGSLWRFGSGSACDPFYEQIHSSLPSLIMHLNDDVQSVKNSCKKTLFQLSTLMRSQDAMDYFNNKSKGFVGDNDQPNYEEFLLDFSKLLIINYPERVNYFVMTVIEFFKSTWVNLRGNAATFIGFILGNLTEDKRTQTNINSTILTKSLVGLLAEKSPAVRKKAAESLGLLHHY.

HEAT repeat units lie at residues 9–47, 65–103, 224–262, 351–389, 597–635, 968–1006, 1131–1168, 1364–1400, 1403–1441, 1490–1528, and 1612–1647; these read SPVL…RQPN, QTHR…SEMT, SEFY…ILSV, RGYS…RLDV, DVTL…TIKN, FDSI…IGFM, SLAN…DKNL, KELI…AGVE, NRYA…VADE, YEQI…LMRS, and NINS…LHHY.

The protein belongs to the MROH1 family. Homooligomer.

The protein resides in the lysosome membrane. Its function is as follows. Lysosome fission factor. This is Maestro heat-like repeat-containing protein family member 1 (mroh1) from Dictyostelium discoideum (Social amoeba).